We begin with the raw amino-acid sequence, 301 residues long: Homoserine kinase (301 aa).

ATP is bound at residue 86-96; it reads PLARGLGSSAT.

Belongs to the GHMP kinase family. Homoserine kinase subfamily.

The protein localises to the cytoplasm. It carries out the reaction L-homoserine + ATP = O-phospho-L-homoserine + ADP + H(+). It participates in amino-acid biosynthesis; L-threonine biosynthesis; L-threonine from L-aspartate: step 4/5. In terms of biological role, catalyzes the ATP-dependent phosphorylation of L-homoserine to L-homoserine phosphate. The sequence is that of Homoserine kinase from Thermosynechococcus vestitus (strain NIES-2133 / IAM M-273 / BP-1).